The chain runs to 660 residues: DNA mismatch repair protein MutL (660 aa).

Belongs to the DNA mismatch repair MutL/HexB family.

Functionally, this protein is involved in the repair of mismatches in DNA. It is required for dam-dependent methyl-directed DNA mismatch repair. May act as a 'molecular matchmaker', a protein that promotes the formation of a stable complex between two or more DNA-binding proteins in an ATP-dependent manner without itself being part of a final effector complex. The protein is DNA mismatch repair protein MutL of Streptococcus equi subsp. zooepidemicus (strain H70).